Consider the following 170-residue polypeptide: Transcription factor E (170 aa).

Residues 1–93 (MKDAYLYVVE…AWYVDDEIIR (93 aa)) enclose the HTH TFE/IIEalpha-type domain.

The protein belongs to the TFE family. In terms of assembly, monomer. Interaction with RNA polymerase subunits RpoF and RpoE is necessary for Tfe stimulatory transcription activity. Able to interact with Tbp and RNA polymerase in the absence of DNA promoter. Interacts both with the preinitiation and elongation complexes.

Its function is as follows. Transcription factor that plays a role in the activation of archaeal genes transcribed by RNA polymerase. Facilitates transcription initiation by enhancing TATA-box recognition by TATA-box-binding protein (Tbp), and transcription factor B (Tfb) and RNA polymerase recruitment. Not absolutely required for transcription in vitro, but particularly important in cases where Tbp or Tfb function is not optimal. It dynamically alters the nucleic acid-binding properties of RNA polymerases by stabilizing the initiation complex and destabilizing elongation complexes. Seems to translocate with the RNA polymerase following initiation and acts by binding to the non template strand of the transcription bubble in elongation complexes. This is Transcription factor E from Pyrobaculum arsenaticum (strain DSM 13514 / JCM 11321 / PZ6).